The primary structure comprises 49 residues: MCYGIIVMILFSLYKGLAPNSAIVGISIMIIIAIGIYLIIEYAIKKIIG.

A helical transmembrane segment spans residues 22-42 (AIVGISIMIIIAIGIYLIIEY).

The protein localises to the membrane. This is an uncharacterized protein from Methanocaldococcus jannaschii (strain ATCC 43067 / DSM 2661 / JAL-1 / JCM 10045 / NBRC 100440) (Methanococcus jannaschii).